We begin with the raw amino-acid sequence, 273 residues long: Hemin import ATP-binding protein HmuV (273 aa).

Residues 2–256 (LTAHHLDVAR…AHIAQCYGFA (255 aa)) enclose the ABC transporter domain. 34–41 (GRNGAGKS) provides a ligand contact to ATP.

This sequence belongs to the ABC transporter superfamily. Heme (hemin) importer (TC 3.A.1.14.5) family. The complex is composed of two ATP-binding proteins (HmuV), two transmembrane proteins (HmuU) and a solute-binding protein (HmuT).

It is found in the cell inner membrane. Its function is as follows. Part of the ABC transporter complex HmuTUV involved in hemin import. Responsible for energy coupling to the transport system. The chain is Hemin import ATP-binding protein HmuV from Burkholderia lata (strain ATCC 17760 / DSM 23089 / LMG 22485 / NCIMB 9086 / R18194 / 383).